A 133-amino-acid polypeptide reads, in one-letter code: Small ribosomal subunit protein uS9 (133 aa).

A disordered region spans residues 102 to 133; it reads KPKGLLTRDPREVERKKYGLKKARRAPQFSKR. Over residues 107 to 118 the composition is skewed to basic and acidic residues; it reads LTRDPREVERKK. Over residues 119-133 the composition is skewed to basic residues; that stretch reads YGLKKARRAPQFSKR.

The protein belongs to the universal ribosomal protein uS9 family.

The chain is Small ribosomal subunit protein uS9 from Deinococcus deserti (strain DSM 17065 / CIP 109153 / LMG 22923 / VCD115).